A 309-amino-acid chain; its full sequence is Oxidoreductase NAD-binding domain-containing protein 1 (309 aa).

An N-terminal signal peptide occupies residues 1-14; the sequence is MVVVIPRLLRGSLG. The FAD-binding FR-type domain maps to 47 to 161; that stretch reads HLERTADVVR…VGGEFFFDPK (115 aa). 175–180 serves as a coordination point for NAD(+); it reads GVGINP.

The chain is Oxidoreductase NAD-binding domain-containing protein 1 (OXNAD1) from Bos taurus (Bovine).